Consider the following 269-residue polypeptide: Interleukin-1 beta (269 aa).

Positions 1–116 (MAEVPELASE…TRNNDACVHD (116 aa)) are excised as a propeptide.

This sequence belongs to the IL-1 family. As to quaternary structure, monomer. In its precursor form, weakly interacts with full-length MEFV; the mature cytokine does not interact at all. Interacts with integrins ITGAV:ITGBV and ITGA5:ITGB1; integrin-binding is required for IL1B signaling. Interacts with cargo receptor TMED10; the interaction is direct and is required for the secretion of IL1B mature form. Interacts with HSP90AB1; the interaction facilitates cargo translocation into the ERGIC. Interacts with HSP90B1; the interaction facilitates cargo translocation into the ERGIC.

The protein localises to the cytoplasm. Its subcellular location is the cytosol. It localises to the secreted. The protein resides in the lysosome. It is found in the extracellular exosome. Functionally, potent pro-inflammatory cytokine. Initially discovered as the major endogenous pyrogen, induces prostaglandin synthesis, neutrophil influx and activation, T-cell activation and cytokine production, B-cell activation and antibody production, and fibroblast proliferation and collagen production. Promotes Th17 differentiation of T-cells. Synergizes with IL12/interleukin-12 to induce IFNG synthesis from T-helper 1 (Th1) cells. Plays a role in angiogenesis by inducing VEGF production synergistically with TNF and IL6. Involved in transduction of inflammation downstream of pyroptosis: its mature form is specifically released in the extracellular milieu by passing through the gasdermin-D (GSDMD) pore. This chain is Interleukin-1 beta (IL1B), found in Macaca nemestrina (Pig-tailed macaque).